We begin with the raw amino-acid sequence, 328 residues long: E3 ubiquitin-protein ligase SINA-like 5 (328 aa).

Residues 1–77 (MARSGGNDGH…GSPKSSQPVK (77 aa)) form a disordered region. Acidic residues-rich tracts occupy residues 10–20 (HEEELDPELFE) and 27–62 (GYED…ENVT). The span at 63–77 (TDEQSGSPKSSQPVK) shows a compositional bias: polar residues. Residues 86 to 122 (CPTCCEPLKRPIYQCSNGHLACSSCCQKLNKKCSFCR) form an RING-type; degenerate zinc finger. Residues 136–324 (VIEASIVPCP…MQICIAYGYK (189 aa)) are SBD. The SIAH-type; degenerate zinc finger occupies 139 to 197 (ASIVPCPNAKHGCKETTTYCNQSSHEKVCKFVRCSCPVSNCNYVSSYSNLKSHACSTAH). The Zn(2+) site is built by cysteine 144, cysteine 151, histidine 163, cysteine 167, cysteine 174, cysteine 179, histidine 191, and histidine 197.

The protein belongs to the SINA (Seven in absentia) family.

The enzyme catalyses S-ubiquitinyl-[E2 ubiquitin-conjugating enzyme]-L-cysteine + [acceptor protein]-L-lysine = [E2 ubiquitin-conjugating enzyme]-L-cysteine + N(6)-ubiquitinyl-[acceptor protein]-L-lysine.. It functions in the pathway protein modification; protein ubiquitination. Its function is as follows. E3 ubiquitin-protein ligase that mediates ubiquitination and subsequent proteasomal degradation of target proteins. E3 ubiquitin ligases accept ubiquitin from an E2 ubiquitin-conjugating enzyme in the form of a thioester and then directly transfers the ubiquitin to targeted substrates. It probably triggers the ubiquitin-mediated degradation of different substrates. This is E3 ubiquitin-protein ligase SINA-like 5 from Arabidopsis thaliana (Mouse-ear cress).